Here is a 155-residue protein sequence, read N- to C-terminus: Large ribosomal subunit protein uL13 (155 aa).

Belongs to the universal ribosomal protein uL13 family. As to quaternary structure, part of the 50S ribosomal subunit.

Its function is as follows. This protein is one of the early assembly proteins of the 50S ribosomal subunit, although it is not seen to bind rRNA by itself. It is important during the early stages of 50S assembly. This Aeropyrum pernix (strain ATCC 700893 / DSM 11879 / JCM 9820 / NBRC 100138 / K1) protein is Large ribosomal subunit protein uL13.